The following is a 589-amino-acid chain: Deoxynucleoside triphosphate triphosphohydrolase SAMHD1 (589 aa).

At Met-1 the chain carries N-acetylmethionine. The segment covering 1-10 has biased composition (polar residues); that stretch reads MQSADSQNTP. The disordered stretch occupies residues 1-41; it reads MQSADSQNTPKRPRRDGSPRTPPDSPLADAETSPSHDLDPD. At Ser-18 the chain carries Phosphoserine. Position 21 is a phosphothreonine (Thr-21). Ser-33 and Ser-88 each carry phosphoserine. Positions 45–100 constitute an SAM domain; it reads WGPEQVWSFLRRCGFSDSELLKRCREKRMSGSLLPFPEDLGISSHGKKMKLLNCIQ. Residues Lys-104 and Val-105 each contribute to the GTP site. Asn-107 contributes to the dGTP binding site. Residues Asp-125, Gln-130, and Arg-133 each contribute to the GTP site. DGTP contacts are provided by Gln-137, Leu-138, Val-144, and Arg-152. Gln-137 contributes to the dATP binding site. DCTP is bound at residue Gln-137. Residue Gln-137 participates in dTTP binding. Arg-152 is a dATP binding site. Arg-152 contacts dCTP. A dTTP-binding site is contributed by Arg-152. The 126-residue stretch at 152–277 folds into the HD domain; that stretch reads RFEHSLGVGY…IKDASKWLYK (126 aa). Residues His-155, His-194, and Asp-195 each coordinate Mn(2+). DATP is bound by residues His-198 and His-203. DCTP-binding residues include His-198 and His-203. Residues His-198 and His-203 each contribute to the dTTP site. The active site involves His-221. Asp-300 lines the Mn(2+) pocket. DGTP is bound by residues Lys-301, Tyr-304, Asp-308, Arg-322, Arg-341, Lys-343, Asn-347, Arg-355, Tyr-363, Gln-364, His-365, and Lys-366. The dATP site is built by Lys-301, Tyr-304, and Asp-308. DCTP-binding residues include Lys-301, Tyr-304, and Asp-308. Residues Lys-301, Tyr-304, and Asp-308 each contribute to the dTTP site. Arg-355 contacts dATP. Arg-355 contributes to the dCTP binding site. Gln-364 is a binding site for dATP. Gln-364 provides a ligand contact to dCTP. Gln-364 contacts dTTP. GTP-binding residues include Arg-440 and Lys-444. Lys-457 participates in a covalent cross-link: Glycyl lysine isopeptide (Lys-Gly) (interchain with G-Cter in SUMO2). Lys-512 contributes to the GTP binding site. Lys-512 contacts dGTP.

The protein belongs to the SAMHD1 family. In terms of assembly, homodimer; in absence of GTP and dNTP. Homotetramer; in GTP- and dNTP-bound form. Interacts with MRE11; leading to stimulate the exonuclease activity of MRE11. Interacts with RBBP8/CtIP. Interacts (via its C-terminus) with CD81. The cofactor is Zn(2+).

It is found in the nucleus. It localises to the chromosome. The enzyme catalyses a 2'-deoxyribonucleoside 5'-triphosphate + H2O = a 2'-deoxyribonucleoside + triphosphate + H(+). It carries out the reaction dATP + H2O = 2'-deoxyadenosine + triphosphate + H(+). It catalyses the reaction dCTP + H2O = 2'-deoxycytidine + triphosphate + H(+). The catalysed reaction is dGTP + H2O = 2'-deoxyguanosine + triphosphate + H(+). The enzyme catalyses dTTP + H2O = thymidine + triphosphate + H(+). Allosterically activated and regulated via the combined actions of GTP and dNTPs (dATP, dGTP, dTTP and dCTP): Allosteric site 1 binds GTP, while allosteric site 2 binds dNTP. Allosteric activation promotes the formation of highly active homotetramers. Its function is as follows. Protein that acts both as a host restriction factor involved in defense response to virus and as a regulator of DNA end resection at stalled replication forks. Has deoxynucleoside triphosphate (dNTPase) activity, which is required to restrict infection by viruses: dNTPase activity reduces cellular dNTP levels to levels too low for retroviral reverse transcription to occur, blocking early-stage virus replication in dendritic and other myeloid cells. Likewise, suppresses LINE-1 retrotransposon activity. In addition to virus restriction, dNTPase activity acts as a regulator of DNA precursor pools by regulating dNTP pools. Functions during S phase at stalled DNA replication forks to promote the resection of gapped or reversed forks: acts by stimulating the exonuclease activity of MRE11, activating the ATR-CHK1 pathway and allowing the forks to restart replication. Its ability to promote degradation of nascent DNA at stalled replication forks is required to prevent induction of type I interferons, thereby preventing chronic inflammation. Ability to promote DNA end resection at stalled replication forks is independent of dNTPase activity. Enhances immunoglobulin hypermutation in B-lymphocytes by promoting transversion mutation. The sequence is that of Deoxynucleoside triphosphate triphosphohydrolase SAMHD1 from Bos taurus (Bovine).